Consider the following 334-residue polypeptide: MLNVLIVGASGYSGAELVNYINRHMFSKIKKIFVSENSSHIGKLFSELHQEFKNIIDLPFEAINYDTLIEKDIDAVFLATDHHVSYSLVPFFLSLNCVVFDLSGAYRVKNTDTYLKYYGFSHQHQDILKRSVYGLAEWNKQEIKKAELIAVPGCYATCIQLALKPLIKENFLNDEFIPIINAISGVSGAGRKANITNSFCEVSLHPYNVFTHRHTPEIIEHLGIPVIFIPHLGSFSRGILASITCKLKCNFTFQDIYNLYNTVYKEKPLIRVYEKNFPSIKAVVKLPFCDIGFIIQDKYIVIIAAEDNLLKGAAAQAIQCFNIRFGFSEIESII.

Residue Cys-154 is part of the active site.

This sequence belongs to the NAGSA dehydrogenase family. Type 1 subfamily.

The protein resides in the cytoplasm. The enzyme catalyses N-acetyl-L-glutamate 5-semialdehyde + phosphate + NADP(+) = N-acetyl-L-glutamyl 5-phosphate + NADPH + H(+). It functions in the pathway amino-acid biosynthesis; L-arginine biosynthesis; N(2)-acetyl-L-ornithine from L-glutamate: step 3/4. Its function is as follows. Catalyzes the NADPH-dependent reduction of N-acetyl-5-glutamyl phosphate to yield N-acetyl-L-glutamate 5-semialdehyde. This is N-acetyl-gamma-glutamyl-phosphate reductase from Buchnera aphidicola subsp. Schizaphis graminum (strain Sg).